A 451-amino-acid polypeptide reads, in one-letter code: Lipase member H (451 aa).

The N-terminal stretch at 1 to 16 (MLRLCFFISFMCLVKS) is a signal peptide. Residue Asn-66 is glycosylated (N-linked (GlcNAc...) asparagine). Residue Ser-154 is the Nucleophile of the active site. The Charge relay system role is filled by Asp-178. Residues Cys-233 and Cys-246 are joined by a disulfide bond. Catalysis depends on His-248, which acts as the Charge relay system. 3 cysteine pairs are disulfide-bonded: Cys-270/Cys-281, Cys-284/Cys-292, and Cys-427/Cys-446.

It belongs to the AB hydrolase superfamily. Lipase family. In terms of assembly, interacts with TTMP/C3orf52. In terms of tissue distribution, expressed in placenta and colon. Weakly expressed in small intestine.

Its subcellular location is the secreted. It localises to the cell membrane. The catalysed reaction is 1-hexadecanoyl-2-(9Z-octadecenoyl)-sn-glycero-3-phosphate + H2O = 2-(9Z-octadecenoyl)-sn-glycero-3-phosphate + hexadecanoate + H(+). Its function is as follows. Hydrolyzes specifically phosphatidic acid (PA) to produce 2-acyl lysophosphatidic acid (LPA; a potent bioactive lipid mediator) and fatty acid. Does not hydrolyze other phospholipids, like phosphatidylserine (PS), phosphatidylcholine (PC) and phosphatidylethanolamine (PE) or triacylglycerol (TG). This is Lipase member H (Liph) from Mus musculus (Mouse).